We begin with the raw amino-acid sequence, 88 residues long: Small ribosomal subunit protein uS17 (88 aa).

It belongs to the universal ribosomal protein uS17 family. In terms of assembly, part of the 30S ribosomal subunit.

In terms of biological role, one of the primary rRNA binding proteins, it binds specifically to the 5'-end of 16S ribosomal RNA. In Vesicomyosocius okutanii subsp. Calyptogena okutanii (strain HA), this protein is Small ribosomal subunit protein uS17.